Reading from the N-terminus, the 360-residue chain is MAGHLASDFAFSPPPGGGGDGPGGPEPGWVDPRTWLSFQGPPGGSGIGPGVGPGAEVWGLPACPPPYDFCGGMAYCAPQVGVGLVPQGGLETPQPEGEAGAGVESNSEGASPEPCAAPAGAAKLDKEKLEPNPEESQDIKALQKDLEQFAKLLKQKRITLGYTQADVGLTLGVLFGKVFSQTTICRFEALQLSFKNMCKLRPLLQKWVEEADNNENLQEICKAETLVQARKRKRTSIENRVRGNLESMFLQCPKPTLQQISHIAQQLGLEKDVVRVWFCNRRQKGKRSSSDYSQREDFEAAGSPFPGGPVSFPLAPGPHFGTPGYGGPHFTTLYSSVPFPEGEAFPSVSVTPLGSPMHSN.

2 disordered regions span residues 1 to 50 and 87 to 118; these read MAGH…IGPG and QGGL…CAAP. The 9aaTAD signature appears at 4-12; it reads HLASDFAFS. Residues 41-50 are compositionally biased toward gly residues; sequence PPGGSGIGPG. Phosphoserine; by MAPK is present on Ser111. A Glycyl lysine isopeptide (Lys-Gly) (interchain with G-Cter in SUMO) cross-link involves residue Lys123. A POU-specific domain is found at 138-212; it reads DIKALQKDLE…LLQKWVEEAD (75 aa). Arg157 and Gln164 together coordinate DNA. 2 DNA-binding regions span residues 180 to 186 and 193 to 196; these read SQTTICR and SFKN. The homeobox DNA-binding region spans 230 to 289; it reads RKRKRTSIENRVRGNLESMFLQCPKPTLQQISHIAQQLGLEKDVVRVWFCNRRQKGKRSS. Thr235 carries the phosphothreonine modification. 3 positions are modified to phosphoserine: Ser236, Ser289, and Ser290. Residues 287 to 316 are disordered; the sequence is RSSSDYSQREDFEAAGSPFPGGPVSFPLAP. Positions 302-313 are enriched in low complexity; that stretch reads GSPFPGGPVSFP. Ser355 is modified (phosphoserine).

It belongs to the POU transcription factor family. Class-5 subfamily. In terms of assembly, interacts with PKM. Interacts with WWP2. Interacts with UBE2I and ZSCAN10. Interacts with PCGF1. Interacts with ESRRB; recruits ESRRB near the POU5F1-SOX2 element in the NANOG proximal promoter; the interaction is DNA independent. Interacts with ZNF322. Interacts with MAPK8 and MAPK9; the interaction allows MAPK8 and MAPK9 to phosphorylate POU5F1 on Ser-355. Interacts (when phosphorylated on Ser-355) with FBXW8. Interacts with FBXW4. Interacts with SOX2 and SOX15; binds synergistically with either SOX2 or SOX15 to DNA. Interacts with DDX56. Sumoylation enhances the protein stability, DNA binding and transactivation activity. Sumoylation is required for enhanced YES1 expression. In terms of processing, ubiquitinated; undergoes 'Lys-63'-linked polyubiquitination by WWP2 leading to proteasomal degradation. Post-translationally, ERK1/2-mediated phosphorylation at Ser-111 promotes nuclear exclusion and proteasomal degradation. Phosphorylation at Thr-235 and Ser-236 decrease DNA-binding and alters ability to activate transcription.

Its subcellular location is the cytoplasm. It localises to the nucleus. Transcription factor that binds to the octamer motif (5'-ATTTGCAT-3'). Forms a trimeric complex with SOX2 or SOX15 on DNA and controls the expression of a number of genes involved in embryonic development such as YES1, FGF4, UTF1 and ZFP206. Critical for early embryogenesis and for embryonic stem cell pluripotency. The chain is POU domain, class 5, transcription factor 1 (POU5F1) from Sus scrofa (Pig).